We begin with the raw amino-acid sequence, 279 residues long: MTARMDKRFAALKAEGRPALVTYFMGGDPDYDTSLGIMKALPEAGADVIELGMPFSDPMADGPAIQLAGQRALKAGQTLKKTLQLAADFRKTDGDTPIVLMGYYNPIYIYGVETFLDDAIAAGIDGLIVVDLPPEMDDELCIPAIRKGINFIRLATPTTDEKRLPAVLKNTSGFVYYVSMNGITGSALPDPSLVSGAVKRIKQHTDLPVCVGFGVKTAEHAKLIGASADGVVVGTAIVNQIATSLTKDGKAGADTIQAVATLVRGLSTGTRSARLVAAE.

Catalysis depends on proton acceptor residues Glu-50 and Asp-61.

The protein belongs to the TrpA family. As to quaternary structure, tetramer of two alpha and two beta chains.

The enzyme catalyses (1S,2R)-1-C-(indol-3-yl)glycerol 3-phosphate + L-serine = D-glyceraldehyde 3-phosphate + L-tryptophan + H2O. It participates in amino-acid biosynthesis; L-tryptophan biosynthesis; L-tryptophan from chorismate: step 5/5. Functionally, the alpha subunit is responsible for the aldol cleavage of indoleglycerol phosphate to indole and glyceraldehyde 3-phosphate. The polypeptide is Tryptophan synthase alpha chain (Rhizobium rhizogenes (strain K84 / ATCC BAA-868) (Agrobacterium radiobacter)).